The chain runs to 435 residues: Light-independent protochlorophyllide reductase subunit N (435 aa).

[4Fe-4S] cluster is bound by residues Cys-23, Cys-48, and Cys-108.

The protein belongs to the BchN/ChlN family. In terms of assembly, protochlorophyllide reductase is composed of three subunits; ChlL, ChlN and ChlB. Forms a heterotetramer of two ChlB and two ChlN subunits. Requires [4Fe-4S] cluster as cofactor.

The protein localises to the plastid. It localises to the chloroplast. It catalyses the reaction chlorophyllide a + oxidized 2[4Fe-4S]-[ferredoxin] + 2 ADP + 2 phosphate = protochlorophyllide a + reduced 2[4Fe-4S]-[ferredoxin] + 2 ATP + 2 H2O. It functions in the pathway porphyrin-containing compound metabolism; chlorophyll biosynthesis (light-independent). Functionally, component of the dark-operative protochlorophyllide reductase (DPOR) that uses Mg-ATP and reduced ferredoxin to reduce ring D of protochlorophyllide (Pchlide) to form chlorophyllide a (Chlide). This reaction is light-independent. The NB-protein (ChlN-ChlB) is the catalytic component of the complex. The polypeptide is Light-independent protochlorophyllide reductase subunit N (Chlorella vulgaris (Green alga)).